A 435-amino-acid polypeptide reads, in one-letter code: MASLQALRGTRDILPPETQVWQWIEQTAREILGRAAVQEVRTPIFEQTALFERGIGEATDVVGKEMYSFRDRGDRSLTLRPEGTAGTVRAYIEHGLASQGGVQRLRYTGPMFRYERPQAGRQRQFHQLGLELLGTADARADAEAIALATQILQALGLKNLRLDLNSVGDACDRAAYRQALVDYLTPYAADLDPDSRDRLERNPLRILDSKDERTQAIVAEAPSLHDYLSERSRQLFEQVQQLLTHLGIDYRLEPKLVRGLDYYTHTAFEIISSDLGAQATVCGGGRYDGLVSQLGGPETPAVGWAMGLERLVLLLQQGQAVPPATLDFYLVSRGAIAEGQALILAQKLRSAGFGVELDLSGSAFGKQFKRADRSGAIACLVLGDAEAEQGQVNLKWLQSGEQQTLDQSELLQDSDHWRSRLQAARTVSPVEVAPL.

Belongs to the class-II aminoacyl-tRNA synthetase family. In terms of assembly, homodimer.

The protein resides in the cytoplasm. The catalysed reaction is tRNA(His) + L-histidine + ATP = L-histidyl-tRNA(His) + AMP + diphosphate + H(+). The protein is Histidine--tRNA ligase of Synechococcus sp. (strain ATCC 27144 / PCC 6301 / SAUG 1402/1) (Anacystis nidulans).